Here is a 246-residue protein sequence, read N- to C-terminus: tRNA pseudouridine synthase A (246 aa).

The Nucleophile role is filled by Asp52. Tyr111 is a binding site for substrate.

This sequence belongs to the tRNA pseudouridine synthase TruA family. In terms of assembly, homodimer.

It carries out the reaction uridine(38/39/40) in tRNA = pseudouridine(38/39/40) in tRNA. Formation of pseudouridine at positions 38, 39 and 40 in the anticodon stem and loop of transfer RNAs. This is tRNA pseudouridine synthase A from Ehrlichia ruminantium (strain Gardel).